Reading from the N-terminus, the 423-residue chain is uncharacterized protein (423 aa).

This sequence belongs to the asfivirus E423R family.

Its subcellular location is the virion. This is an uncharacterized protein from Ornithodoros (relapsing fever ticks).